A 402-amino-acid polypeptide reads, in one-letter code: Phosphoglycerate kinase (402 aa).

Residues 21 to 23 (DLN), R36, 59 to 62 (HLGR), R114, and R147 contribute to the substrate site. Residues K202, E329, and 355–358 (GGDT) each bind ATP.

The protein belongs to the phosphoglycerate kinase family. Monomer.

The protein localises to the cytoplasm. The catalysed reaction is (2R)-3-phosphoglycerate + ATP = (2R)-3-phospho-glyceroyl phosphate + ADP. It functions in the pathway carbohydrate degradation; glycolysis; pyruvate from D-glyceraldehyde 3-phosphate: step 2/5. This Psychrobacter sp. (strain PRwf-1) protein is Phosphoglycerate kinase.